A 139-amino-acid polypeptide reads, in one-letter code: Ribulose bisphosphate carboxylase small subunit, chromosomal (139 aa).

This sequence belongs to the RuBisCO small chain family. Heterohexadecamer of 8 large and 8 small subunits.

Its function is as follows. RuBisCO catalyzes two reactions: the carboxylation of D-ribulose 1,5-bisphosphate, the primary event in carbon dioxide fixation, as well as the oxidative fragmentation of the pentose substrate. Both reactions occur simultaneously and in competition at the same active site. Although the small subunit is not catalytic it is essential for maximal activity. This Cupriavidus necator (Alcaligenes eutrophus) protein is Ribulose bisphosphate carboxylase small subunit, chromosomal.